The sequence spans 292 residues: 4-hydroxy-tetrahydrodipicolinate synthase (292 aa).

Position 45 (Thr-45) interacts with pyruvate. The active-site Proton donor/acceptor is Tyr-133. Lys-161 acts as the Schiff-base intermediate with substrate in catalysis. Ile-203 lines the pyruvate pocket.

The protein belongs to the DapA family. In terms of assembly, homodimer.

The protein resides in the cytoplasm. The catalysed reaction is L-aspartate 4-semialdehyde + pyruvate = (2S,4S)-4-hydroxy-2,3,4,5-tetrahydrodipicolinate + H2O + H(+). Its pathway is amino-acid biosynthesis; L-lysine biosynthesis via DAP pathway; (S)-tetrahydrodipicolinate from L-aspartate: step 3/4. Its function is as follows. Catalyzes the condensation of (S)-aspartate-beta-semialdehyde [(S)-ASA] and pyruvate to 4-hydroxy-tetrahydrodipicolinate (HTPA). The sequence is that of 4-hydroxy-tetrahydrodipicolinate synthase from Pseudomonas savastanoi pv. phaseolicola (strain 1448A / Race 6) (Pseudomonas syringae pv. phaseolicola (strain 1448A / Race 6)).